The sequence spans 125 residues: uncharacterized protein (125 aa).

Belongs to the asfivirus B125R family.

This is an uncharacterized protein from African swine fever virus (isolate Tick/Malawi/Lil 20-1/1983) (ASFV).